A 252-amino-acid polypeptide reads, in one-letter code: 3-dehydroquinate dehydratase (252 aa).

Residues Ser-21, 46–48 (EWR), and Arg-82 contribute to the 3-dehydroquinate site. Residue His-143 is the Proton donor/acceptor of the active site. Residue Lys-170 is the Schiff-base intermediate with substrate of the active site. 3-dehydroquinate-binding residues include Arg-213, Ser-232, and Gln-236.

Belongs to the type-I 3-dehydroquinase family. Homodimer.

It catalyses the reaction 3-dehydroquinate = 3-dehydroshikimate + H2O. It functions in the pathway metabolic intermediate biosynthesis; chorismate biosynthesis; chorismate from D-erythrose 4-phosphate and phosphoenolpyruvate: step 3/7. In terms of biological role, involved in the third step of the chorismate pathway, which leads to the biosynthesis of aromatic amino acids. Catalyzes the cis-dehydration of 3-dehydroquinate (DHQ) and introduces the first double bond of the aromatic ring to yield 3-dehydroshikimate. The chain is 3-dehydroquinate dehydratase from Escherichia coli (strain K12 / MC4100 / BW2952).